The chain runs to 197 residues: Peptidyl-tRNA hydrolase (197 aa).

Y23 lines the tRNA pocket. The active-site Proton acceptor is the H28. Residues F73, N75, and N121 each contribute to the tRNA site.

Belongs to the PTH family. In terms of assembly, monomer.

It is found in the cytoplasm. The enzyme catalyses an N-acyl-L-alpha-aminoacyl-tRNA + H2O = an N-acyl-L-amino acid + a tRNA + H(+). In terms of biological role, hydrolyzes ribosome-free peptidyl-tRNAs (with 1 or more amino acids incorporated), which drop off the ribosome during protein synthesis, or as a result of ribosome stalling. Its function is as follows. Catalyzes the release of premature peptidyl moieties from peptidyl-tRNA molecules trapped in stalled 50S ribosomal subunits, and thus maintains levels of free tRNAs and 50S ribosomes. In Frankia casuarinae (strain DSM 45818 / CECT 9043 / HFP020203 / CcI3), this protein is Peptidyl-tRNA hydrolase.